Reading from the N-terminus, the 223-residue chain is Small heat shock protein hspI, mitochondrial (223 aa).

Residues 1 to 23 constitute a mitochondrion transit peptide; the sequence is MYKLSKTTPFFFRRAFLCGRRGG. A sHSP domain is found at 109 to 223; the sequence is KTRGFRSPKT…YVKSTTINVQ (115 aa).

This sequence belongs to the small heat shock protein (HSP20) family.

The protein resides in the mitochondrion. This is Small heat shock protein hspI, mitochondrial (hspI) from Dictyostelium discoideum (Social amoeba).